We begin with the raw amino-acid sequence, 373 residues long: Chaperone protein DnaJ (373 aa).

Residues 5 to 69 form the J domain; it reads DYYEVLGVNK…NKRVNYDQFG (65 aa). The CR-type zinc-finger motif lies at 130–212; that stretch reads GTKKEISIKK…CKGKGTENKT (83 aa). Zn(2+)-binding residues include cysteine 143, cysteine 146, cysteine 160, cysteine 163, cysteine 186, cysteine 189, cysteine 200, and cysteine 203. 4 CXXCXGXG motif repeats span residues 143–150, 160–167, 186–193, and 200–207; these read CHTCNGDG, CSYCNGAG, CPKCEGSG, and CPTCKGKG.

Belongs to the DnaJ family. As to quaternary structure, homodimer. Requires Zn(2+) as cofactor.

The protein localises to the cytoplasm. Participates actively in the response to hyperosmotic and heat shock by preventing the aggregation of stress-denatured proteins and by disaggregating proteins, also in an autonomous, DnaK-independent fashion. Unfolded proteins bind initially to DnaJ; upon interaction with the DnaJ-bound protein, DnaK hydrolyzes its bound ATP, resulting in the formation of a stable complex. GrpE releases ADP from DnaK; ATP binding to DnaK triggers the release of the substrate protein, thus completing the reaction cycle. Several rounds of ATP-dependent interactions between DnaJ, DnaK and GrpE are required for fully efficient folding. Also involved, together with DnaK and GrpE, in the DNA replication of plasmids through activation of initiation proteins. This chain is Chaperone protein DnaJ, found in Staphylococcus epidermidis (strain ATCC 35984 / DSM 28319 / BCRC 17069 / CCUG 31568 / BM 3577 / RP62A).